The following is a 107-amino-acid chain: YcgL domain-containing protein Psyc_0800 (107 aa).

In terms of domain architecture, YcgL spans 1–95; it reads MHCDIYKFLK…QDVMRRQAEL (95 aa).

The chain is YcgL domain-containing protein Psyc_0800 from Psychrobacter arcticus (strain DSM 17307 / VKM B-2377 / 273-4).